The following is a 305-amino-acid chain: Ribosomal RNA small subunit methyltransferase H (305 aa).

S-adenosyl-L-methionine contacts are provided by residues 47–49 (GGH), aspartate 66, phenylalanine 93, aspartate 108, and glutamine 115.

The protein belongs to the methyltransferase superfamily. RsmH family.

The protein resides in the cytoplasm. The catalysed reaction is cytidine(1402) in 16S rRNA + S-adenosyl-L-methionine = N(4)-methylcytidine(1402) in 16S rRNA + S-adenosyl-L-homocysteine + H(+). Functionally, specifically methylates the N4 position of cytidine in position 1402 (C1402) of 16S rRNA. The chain is Ribosomal RNA small subunit methyltransferase H from Prochlorococcus marinus (strain MIT 9211).